Here is a 973-residue protein sequence, read N- to C-terminus: Leucine--tRNA ligase, chloroplastic/mitochondrial (973 aa).

The short motif at 126–135 is the 'HIGH' region element; the sequence is PSGAGLHVGH. A 'KMSKS' region motif is present at residues 730-734; it reads KMSKS. Lysine 733 lines the ATP pocket.

It belongs to the class-I aminoacyl-tRNA synthetase family.

The protein localises to the plastid. It is found in the chloroplast. It localises to the mitochondrion. The enzyme catalyses tRNA(Leu) + L-leucine + ATP = L-leucyl-tRNA(Leu) + AMP + diphosphate. Its function is as follows. Catalyzes the specific attachment of an amino acid to its cognate tRNA in a two step reaction: the amino acid (AA) is first activated by ATP to form AA-AMP and then transferred to the acceptor end of the tRNA. The protein is Leucine--tRNA ligase, chloroplastic/mitochondrial of Arabidopsis thaliana (Mouse-ear cress).